The sequence spans 331 residues: MEKPEWSELPGDLINLTANRFSSISDVLRVRSICKPWRSAAATPKSFQCNLPSSNKMIETVLSPTTFFRVTGPSSCSYKGWLIRTKQVSESSKINLLSPFFRQLLTPSQQTLDLLKFEVSEIRQSYEIHIFDKYLIQGVIGKEGPSHILSRVVFLDNLIFAVGQDDKIWCCKSGEESSRIWTKIKNQVEDFLDIILHKGQVYALDLTGAIWWISLSPLSLLQFTPSIPMDYDGYDSCNKRLVEYCGDLCIIHQLRLKKAYIRRSQRTVGFKVYKMDEYVAKWVEVRSLGDKALIVARDSCFTVVASEYHGCLNNSIYFVDNVRKSVIRMKL.

The F-box domain maps to 4–52; sequence PEWSELPGDLINLTANRFSSISDVLRVRSICKPWRSAAATPKSFQCNLP.

The polypeptide is F-box protein At2g26160 (Arabidopsis thaliana (Mouse-ear cress)).